A 323-amino-acid polypeptide reads, in one-letter code: rRNA 2'-O-methyltransferase fibrillarin (323 aa).

Residues 1–80 (MSFRPGSRGG…GARGGAKGGA (80 aa)) form a disordered region. A compositionally biased stretch (gly residues) spans 7–78 (SRGGARGGRG…RGGARGGAKG (72 aa)). 16 positions are modified to asymmetric dimethylarginine: R8, R12, R15, R19, R25, R29, R35, R39, R43, R49, R53, R57, R61, R65, R69, and R73. S-adenosyl-L-methionine is bound by residues 175-176 (TS), 194-195 (EF), 219-220 (DA), and 239-242 (DVAQ).

Belongs to the methyltransferase superfamily. Fibrillarin family. Component of box C/D small nucleolar ribonucleoprotein (snoRNP) particles that contain SNU13, NOP1, SIK1/NOP56 and NOP58, plus a guide RNA. In terms of processing, by homology to other fibrillarins, some or all of the N-terminal domain arginines are modified to asymmetric dimethylarginine (DMA).

The protein localises to the nucleus. The protein resides in the nucleolus. It catalyses the reaction L-glutaminyl-[histone H2A] + S-adenosyl-L-methionine = N(5)-methyl-L-glutaminyl-[histone H2A] + S-adenosyl-L-homocysteine + H(+). S-adenosyl-L-methionine-dependent methyltransferase that has the ability to methylate both RNAs and proteins. Involved in pre-rRNA processing. Utilizes the methyl donor S-adenosyl-L-methionine to catalyze the site-specific 2'-hydroxyl methylation of ribose moieties in pre-ribosomal RNA. Site specificity is provided by a guide RNA that base pairs with the substrate. Methylation occurs at a characteristic distance from the sequence involved in base pairing with the guide RNA. Also acts as a protein methyltransferase by mediating methylation of 'Gln-105' of histone H2A (H2AQ105me), a modification that impairs binding of the FACT complex and is specifically present at 35S ribosomal DNA locus. This Candida glabrata (strain ATCC 2001 / BCRC 20586 / JCM 3761 / NBRC 0622 / NRRL Y-65 / CBS 138) (Yeast) protein is rRNA 2'-O-methyltransferase fibrillarin (NOP1).